The primary structure comprises 227 residues: Lipoprotein-releasing system ATP-binding protein LolD (227 aa).

In terms of domain architecture, ABC transporter spans 6–227; the sequence is LTSQKLYKSY…LHEGSLYARE (222 aa). 42–49 contributes to the ATP binding site; it reads GPSGSGKS.

Belongs to the ABC transporter superfamily. Lipoprotein translocase (TC 3.A.1.125) family. The complex is composed of two ATP-binding proteins (LolD) and two transmembrane proteins (LolC and LolE).

Its subcellular location is the cell inner membrane. Its function is as follows. Part of the ABC transporter complex LolCDE involved in the translocation of mature outer membrane-directed lipoproteins, from the inner membrane to the periplasmic chaperone, LolA. Responsible for the formation of the LolA-lipoprotein complex in an ATP-dependent manner. The sequence is that of Lipoprotein-releasing system ATP-binding protein LolD from Legionella pneumophila (strain Lens).